Consider the following 152-residue polypeptide: Protein-export protein SecB (152 aa).

It belongs to the SecB family. As to quaternary structure, homotetramer, a dimer of dimers. One homotetramer interacts with 1 SecA dimer.

The protein localises to the cytoplasm. Its function is as follows. One of the proteins required for the normal export of preproteins out of the cell cytoplasm. It is a molecular chaperone that binds to a subset of precursor proteins, maintaining them in a translocation-competent state. It also specifically binds to its receptor SecA. The chain is Protein-export protein SecB from Rickettsia massiliae (strain Mtu5).